Here is a 607-residue protein sequence, read N- to C-terminus: ATP-dependent RNA helicase DBP6 (607 aa).

The tract at residues 1-83 (MFAARFDPSR…GTGEADKRHQ (83 aa)) is disordered. The span at 34–59 (QDESESEMSSAESEDEAMQLDDEEEV) shows a compositional bias: acidic residues. Residues 60–69 (VDSKGKENHG) are compositionally biased toward basic and acidic residues. Residues 184–192 (AFPIQTALL) carry the Q motif motif. A Helicase ATP-binding domain is found at 208–388 (RYYTRKVGDI…DLQLHNPKLF (181 aa)). 221 to 228 (ASTGSGKT) serves as a coordination point for ATP. The short motif at 328-331 (DEAD) is the DEAD box element. A Helicase C-terminal domain is found at 419-578 (ILLRLLPLLS…GSHLFFDEEQ (160 aa)).

This sequence belongs to the DEAD box helicase family. DDX51/DBP6 subfamily. Associated with pre-ribosomal particles.

It is found in the nucleus. Its subcellular location is the nucleolus. It carries out the reaction ATP + H2O = ADP + phosphate + H(+). Functionally, ATP-binding RNA helicase involved in the biogenesis of 60S ribosomal subunits and is required for the normal formation of 25S and 5.8S rRNAs. This chain is ATP-dependent RNA helicase DBP6 (DBP6), found in Eremothecium gossypii (strain ATCC 10895 / CBS 109.51 / FGSC 9923 / NRRL Y-1056) (Yeast).